We begin with the raw amino-acid sequence, 385 residues long: 8-amino-7-oxononanoate synthase (385 aa).

Arg-23 serves as a coordination point for substrate. Residue 110 to 111 (GF) participates in pyridoxal 5'-phosphate binding. His-135 contacts substrate. Pyridoxal 5'-phosphate-binding residues include Ser-180, His-208, and Thr-234. Residue Lys-237 is modified to N6-(pyridoxal phosphate)lysine. Thr-350 serves as a coordination point for substrate.

Belongs to the class-II pyridoxal-phosphate-dependent aminotransferase family. BioF subfamily. Homodimer. Requires pyridoxal 5'-phosphate as cofactor.

The catalysed reaction is 6-carboxyhexanoyl-[ACP] + L-alanine + H(+) = (8S)-8-amino-7-oxononanoate + holo-[ACP] + CO2. It participates in cofactor biosynthesis; biotin biosynthesis. In terms of biological role, catalyzes the decarboxylative condensation of pimeloyl-[acyl-carrier protein] and L-alanine to produce 8-amino-7-oxononanoate (AON), [acyl-carrier protein], and carbon dioxide. The polypeptide is 8-amino-7-oxononanoate synthase (Vibrio vulnificus (strain YJ016)).